A 486-amino-acid chain; its full sequence is Galactose-1-phosphate uridylyltransferase (486 aa).

The protein belongs to the galactose-1-phosphate uridylyltransferase type 2 family.

It localises to the cytoplasm. The catalysed reaction is alpha-D-galactose 1-phosphate + UDP-alpha-D-glucose = alpha-D-glucose 1-phosphate + UDP-alpha-D-galactose. The protein operates within carbohydrate metabolism; galactose metabolism. The protein is Galactose-1-phosphate uridylyltransferase of Pediococcus pentosaceus (strain ATCC 25745 / CCUG 21536 / LMG 10740 / 183-1w).